We begin with the raw amino-acid sequence, 957 residues long: Glycine dehydrogenase (decarboxylating) (957 aa).

Position 708 is an N6-(pyridoxal phosphate)lysine (lysine 708).

This sequence belongs to the GcvP family. The glycine cleavage system is composed of four proteins: P, T, L and H. Pyridoxal 5'-phosphate is required as a cofactor.

The catalysed reaction is N(6)-[(R)-lipoyl]-L-lysyl-[glycine-cleavage complex H protein] + glycine + H(+) = N(6)-[(R)-S(8)-aminomethyldihydrolipoyl]-L-lysyl-[glycine-cleavage complex H protein] + CO2. The glycine cleavage system catalyzes the degradation of glycine. The P protein binds the alpha-amino group of glycine through its pyridoxal phosphate cofactor; CO(2) is released and the remaining methylamine moiety is then transferred to the lipoamide cofactor of the H protein. This is Glycine dehydrogenase (decarboxylating) from Escherichia fergusonii (strain ATCC 35469 / DSM 13698 / CCUG 18766 / IAM 14443 / JCM 21226 / LMG 7866 / NBRC 102419 / NCTC 12128 / CDC 0568-73).